A 297-amino-acid polypeptide reads, in one-letter code: UDP-N-acetylenolpyruvoylglucosamine reductase (297 aa).

The 174-residue stretch at 22 to 195 (RVGGPAQYYA…LAGRFRLHRA (174 aa)) folds into the FAD-binding PCMH-type domain. Residue Arg-169 is part of the active site. Ser-223 serves as the catalytic Proton donor. Residue Glu-293 is part of the active site.

This sequence belongs to the MurB family. Requires FAD as cofactor.

It localises to the cytoplasm. It catalyses the reaction UDP-N-acetyl-alpha-D-muramate + NADP(+) = UDP-N-acetyl-3-O-(1-carboxyvinyl)-alpha-D-glucosamine + NADPH + H(+). It participates in cell wall biogenesis; peptidoglycan biosynthesis. Functionally, cell wall formation. This Chloroflexus aggregans (strain MD-66 / DSM 9485) protein is UDP-N-acetylenolpyruvoylglucosamine reductase.